We begin with the raw amino-acid sequence, 278 residues long: Octanoyl-[GcvH]:protein N-octanoyltransferase (278 aa).

The BPL/LPL catalytic domain occupies 41-247 (LVSPPTIRTW…LLHRLAGEVH (207 aa)). Cysteine 146 functions as the Acyl-thioester intermediate in the catalytic mechanism.

It belongs to the octanoyltransferase LipL family.

The catalysed reaction is N(6)-octanoyl-L-lysyl-[glycine-cleavage complex H protein] + L-lysyl-[lipoyl-carrier protein] = N(6)-octanoyl-L-lysyl-[lipoyl-carrier protein] + L-lysyl-[glycine-cleavage complex H protein]. The protein operates within protein modification; protein lipoylation via endogenous pathway; protein N(6)-(lipoyl)lysine from octanoyl-[acyl-carrier-protein]. In terms of biological role, catalyzes the amidotransfer (transamidation) of the octanoyl moiety from octanoyl-GcvH to the lipoyl domain of the E2 subunit of lipoate-dependent enzymes. The protein is Octanoyl-[GcvH]:protein N-octanoyltransferase of Lysinibacillus sphaericus (strain C3-41).